The following is a 214-amino-acid chain: Putative ankyrin repeat protein R844 (214 aa).

ANK repeat units lie at residues 41–70 (VEKN…QNKF), 81–110 (SLDK…NVKT), 111–140 (DNNM…DVRA), 142–170 (NDCA…DVTS), and 172–200 (NNFA…DIRA).

This chain is Putative ankyrin repeat protein R844, found in Acanthamoeba polyphaga mimivirus (APMV).